A 533-amino-acid polypeptide reads, in one-letter code: CTP synthase (533 aa).

Residues 1 to 269 (MKKNLKILVI…HEILSSKLNI (269 aa)) are amidoligase domain. Ser-16 contributes to the CTP binding site. A UTP-binding site is contributed by Ser-16. ATP-binding positions include 17–22 (GIGKGV) and Asp-73. Mg(2+) is bound by residues Asp-73 and Glu-143. CTP-binding positions include 150–152 (DME), 190–195 (KSKPTQ), and Lys-226. UTP-binding positions include 190–195 (KSKPTQ) and Lys-226. One can recognise a Glutamine amidotransferase type-1 domain in the interval 304–533 (YAELDDSYAS…LFLGLIKACI (230 aa)). Gly-355 lines the L-glutamine pocket. Catalysis depends on Cys-382, which acts as the Nucleophile; for glutamine hydrolysis. Residues 383 to 386 (LGLQ), Glu-406, and Arg-466 each bind L-glutamine. Catalysis depends on residues His-511 and Glu-513.

This sequence belongs to the CTP synthase family. Homotetramer.

The catalysed reaction is UTP + L-glutamine + ATP + H2O = CTP + L-glutamate + ADP + phosphate + 2 H(+). It catalyses the reaction L-glutamine + H2O = L-glutamate + NH4(+). The enzyme catalyses UTP + NH4(+) + ATP = CTP + ADP + phosphate + 2 H(+). It functions in the pathway pyrimidine metabolism; CTP biosynthesis via de novo pathway; CTP from UDP: step 2/2. Allosterically activated by GTP, when glutamine is the substrate; GTP has no effect on the reaction when ammonia is the substrate. The allosteric effector GTP functions by stabilizing the protein conformation that binds the tetrahedral intermediate(s) formed during glutamine hydrolysis. Inhibited by the product CTP, via allosteric rather than competitive inhibition. In terms of biological role, catalyzes the ATP-dependent amination of UTP to CTP with either L-glutamine or ammonia as the source of nitrogen. Regulates intracellular CTP levels through interactions with the four ribonucleotide triphosphates. The polypeptide is CTP synthase (Borreliella burgdorferi (strain ATCC 35210 / DSM 4680 / CIP 102532 / B31) (Borrelia burgdorferi)).